A 132-amino-acid polypeptide reads, in one-letter code: MRRGLVIVGHGSQLNHYREVMELHRKRIEESGAFDEVKIAFAARKRRPMPDEAIREMNCDIIYVVPLFISYGLHVTEDLPDLLGFPRGRGIKEGEFEGKKVVICEPIGEDYFVTYAILNSVFRIGRDGKGEE.

Residue His10 is the Proton acceptor of the active site. His10 is a binding site for Co(2+). Substrate-binding positions include Arg46 and 69–74 (ISYGLH). His74 is a binding site for Co(2+).

The protein belongs to the CbiX family. CbiXS subfamily. Homotetramer; dimer of dimers.

It carries out the reaction Co-sirohydrochlorin + 2 H(+) = sirohydrochlorin + Co(2+). It functions in the pathway cofactor biosynthesis; adenosylcobalamin biosynthesis; cob(II)yrinate a,c-diamide from sirohydrochlorin (anaerobic route): step 1/10. Catalyzes the insertion of Co(2+) into sirohydrochlorin as part of the anaerobic pathway to cobalamin biosynthesis. This chain is Sirohydrochlorin cobaltochelatase, found in Archaeoglobus fulgidus (strain ATCC 49558 / DSM 4304 / JCM 9628 / NBRC 100126 / VC-16).